The chain runs to 103 residues: Cell division protein FtsB (103 aa).

The Cytoplasmic portion of the chain corresponds to 1–3; it reads MGK. A helical transmembrane segment spans residues 4–21; it reads LTLLLLALLVWLQYSLWF. The Periplasmic portion of the chain corresponds to 22–103; sequence GKNGIHDYSR…RAQTAGQNNR (82 aa). A coiled-coil region spans residues 33–62; sequence NDDVVAQQATNAKLKARNDQLFAEIDDLNG.

The protein belongs to the FtsB family. In terms of assembly, part of a complex composed of FtsB, FtsL and FtsQ.

It is found in the cell inner membrane. In terms of biological role, essential cell division protein. May link together the upstream cell division proteins, which are predominantly cytoplasmic, with the downstream cell division proteins, which are predominantly periplasmic. The chain is Cell division protein FtsB from Salmonella arizonae (strain ATCC BAA-731 / CDC346-86 / RSK2980).